A 115-amino-acid chain; its full sequence is Phosphoribosyl-AMP cyclohydrolase (115 aa).

Position 80 (aspartate 80) interacts with Mg(2+). Cysteine 81 serves as a coordination point for Zn(2+). Residues aspartate 82 and aspartate 84 each contribute to the Mg(2+) site. Zn(2+) is bound by residues cysteine 97 and cysteine 104.

The protein belongs to the PRA-CH family. Homodimer. The cofactor is Mg(2+). Zn(2+) serves as cofactor.

The protein localises to the cytoplasm. It catalyses the reaction 1-(5-phospho-beta-D-ribosyl)-5'-AMP + H2O = 1-(5-phospho-beta-D-ribosyl)-5-[(5-phospho-beta-D-ribosylamino)methylideneamino]imidazole-4-carboxamide. The protein operates within amino-acid biosynthesis; L-histidine biosynthesis; L-histidine from 5-phospho-alpha-D-ribose 1-diphosphate: step 3/9. In terms of biological role, catalyzes the hydrolysis of the adenine ring of phosphoribosyl-AMP. The chain is Phosphoribosyl-AMP cyclohydrolase from Mycobacterium bovis (strain ATCC BAA-935 / AF2122/97).